The primary structure comprises 256 residues: Histone H1 (256 aa).

Low complexity-rich tracts occupy residues 1–19 and 27–43; these read MSDS…PPAT and KKAS…ASAT. Disordered regions lie at residues 1-53 and 108-256; these read MSDS…QQMV and GKGA…AAKK. Position 11 is a phosphoserine (Ser-11). The region spanning 45–119 is the H15 domain; the sequence is SHPPTQQMVD…GASGSFKLSA (75 aa). 2 stretches are compositionally biased toward basic and acidic residues: residues 121-140 and 176-193; these read AKKE…EKKV and KTAE…DAKK. The segment covering 194–229 has biased composition (low complexity); that stretch reads TGIIKSKPAATKAKVTAAKPKAVVAKASKAKPAVSA. Basic residues predominate over residues 245-256; the sequence is KKPKAKTTAAKK.

Belongs to the histone H1/H5 family. In terms of processing, phosphorylated in oocytes during prophase I of meiosis.

Its subcellular location is the nucleus. The protein resides in the chromosome. Histones H1 are necessary for the condensation of nucleosome chains into higher-order structures. This is Histone H1 (His1) from Drosophila melanogaster (Fruit fly).